The primary structure comprises 1227 residues: ATP-dependent helicase/nuclease subunit A (1227 aa).

A UvrD-like helicase ATP-binding domain is found at 3–477 (VKYTPDQARA…IIFAENFRSS (475 aa)). 24–31 (ASAGSGKT) provides a ligand contact to ATP. The UvrD-like helicase C-terminal domain occupies 505 to 788 (GQLKFAAGYD…KLMTIHASKG (284 aa)).

This sequence belongs to the helicase family. AddA subfamily. Heterodimer of AddA and AddB/RexB. Mg(2+) is required as a cofactor.

The enzyme catalyses Couples ATP hydrolysis with the unwinding of duplex DNA by translocating in the 3'-5' direction.. The catalysed reaction is ATP + H2O = ADP + phosphate + H(+). Its function is as follows. The heterodimer acts as both an ATP-dependent DNA helicase and an ATP-dependent, dual-direction single-stranded exonuclease. Recognizes the chi site generating a DNA molecule suitable for the initiation of homologous recombination. The AddA nuclease domain is required for chi fragment generation; this subunit has the helicase and 3' -&gt; 5' nuclease activities. This Lactobacillus delbrueckii subsp. bulgaricus (strain ATCC 11842 / DSM 20081 / BCRC 10696 / JCM 1002 / NBRC 13953 / NCIMB 11778 / NCTC 12712 / WDCM 00102 / Lb 14) protein is ATP-dependent helicase/nuclease subunit A.